Here is a 232-residue protein sequence, read N- to C-terminus: U2 small nuclear ribonucleoprotein B'' (232 aa).

An RRM 1 domain is found at 10–89 (QTVYLRNLNE…KRMRVQYAKT (80 aa)). The segment at 90–159 (RSDCLATEDG…QEPPAPPNNI (70 aa)) is disordered. The span at 108–123 (KKQEEKAAEKKRRAEE) shows a compositional bias: basic and acidic residues. Residues 127 to 151 (SGPNAAAQSNGTGYQASRLGKTSQE) show a composition bias toward polar residues. Residues 158 to 232 (NILFIQNLPA…NPMAISYAKK (75 aa)) form the RRM 2 domain.

It belongs to the RRM U1 A/B'' family. In terms of assembly, component of the spliceosome where it is associated with snRNP U2.

The protein localises to the nucleus. The protein resides in the cajal body. It is found in the nucleoplasm. Its subcellular location is the cytoplasm. In terms of biological role, involved in nuclear pre-mRNA splicing. This chain is U2 small nuclear ribonucleoprotein B'', found in Oryza sativa subsp. japonica (Rice).